Here is a 361-residue protein sequence, read N- to C-terminus: Eukaryotic translation initiation factor 3 subunit F (361 aa).

The interval 1–86 is disordered; that stretch reads MATPAVPVSA…PAPALPGPAL (86 aa). A2 carries the post-translational modification N-acetylalanine. Composition is skewed to pro residues over residues 9 to 20 and 30 to 40; these read SAPPATPAPVPA and VPAPTPAPAAA. Over residues 41–78 the composition is skewed to low complexity; the sequence is PVPAAAPASSSDPAAAAATTAAPGQTPASAQAPAQTPA. Position 50 is a phosphoserine; by CDK11; in vitro (S50). Residues 96 to 226 enclose the MPN domain; that stretch reads VRLHPVILAS…IKAYVSTLMG (131 aa). At K242 the chain carries N6-acetyllysine. Phosphoserine is present on S262.

This sequence belongs to the eIF-3 subunit F family. As to quaternary structure, component of the eukaryotic translation initiation factor 3 (eIF-3) complex, which is composed of 13 subunits: EIF3A, EIF3B, EIF3C, EIF3D, EIF3E, EIF3F, EIF3G, EIF3H, EIF3I, EIF3J, EIF3K, EIF3L and EIF3M. The eIF-3 complex appears to include 3 stable modules: module A is composed of EIF3A, EIF3B, EIF3G and EIF3I; module B is composed of EIF3F, EIF3H, and EIF3M; and module C is composed of EIF3C, EIF3D, EIF3E, EIF3K and EIF3L. EIF3C of module C binds EIF3B of module A and EIF3H of module B, thereby linking the three modules. EIF3J is a labile subunit that binds to the eIF-3 complex via EIF3B. The eIF-3 complex interacts with RPS6KB1 under conditions of nutrient depletion. Mitogenic stimulation leads to binding and activation of a complex composed of MTOR and RPTOR, leading to phosphorylation and release of RPS6KB1 and binding of EIF4B to eIF-3. Interacts with RNF139; the interaction leads to protein translation inhibitions in a ubiquitination-dependent manner. Interacts with DTX1, the interaction is required for deubiquitinating activity towards NOTCH1. In terms of processing, phosphorylation is enhanced upon serum stimulation. Phosphorylated during apoptosis by caspase-processed CDK11.

The protein resides in the cytoplasm. The catalysed reaction is Thiol-dependent hydrolysis of ester, thioester, amide, peptide and isopeptide bonds formed by the C-terminal Gly of ubiquitin (a 76-residue protein attached to proteins as an intracellular targeting signal).. Functionally, component of the eukaryotic translation initiation factor 3 (eIF-3) complex, which is required for several steps in the initiation of protein synthesis. The eIF-3 complex associates with the 40S ribosome and facilitates the recruitment of eIF-1, eIF-1A, eIF-2:GTP:methionyl-tRNAi and eIF-5 to form the 43S pre-initiation complex (43S PIC). The eIF-3 complex stimulates mRNA recruitment to the 43S PIC and scanning of the mRNA for AUG recognition. The eIF-3 complex is also required for disassembly and recycling of post-termination ribosomal complexes and subsequently prevents premature joining of the 40S and 60S ribosomal subunits prior to initiation. The eIF-3 complex specifically targets and initiates translation of a subset of mRNAs involved in cell proliferation, including cell cycling, differentiation and apoptosis, and uses different modes of RNA stem-loop binding to exert either translational activation or repression. In terms of biological role, deubiquitinates activated NOTCH1, promoting its nuclear import, thereby acting as a positive regulator of Notch signaling. The protein is Eukaryotic translation initiation factor 3 subunit F of Pan troglodytes (Chimpanzee).